Here is a 448-residue protein sequence, read N- to C-terminus: Velvet complex subunit 2 (448 aa).

2 disordered regions span residues 1–153 (MNSA…SKIE) and 224–306 (EPGT…NGYG). The segment covering 15–34 (PGPAYSSSAPPPIHTYQQHQ) has biased composition (low complexity). Pro residues-rich tracts occupy residues 35 to 44 (HPPPPLPPPS) and 52 to 61 (PPLPPPPSAP). A compositionally biased stretch (low complexity) spans 96-107 (APYQQSQPSQYP). The span at 116-132 (VPPPSQHDEPPPPPSSG) shows a compositional bias: pro residues. In terms of domain architecture, Velvet spans 155–431 (GSGWKYSLDV…ANQGIKIPIR (277 aa)). Residues 260-292 (QQSYGPAPSYPPSSSYGPPQQYYPRHSGYSAEP) are compositionally biased toward low complexity.

It belongs to the velvet family. VelB subfamily. As to quaternary structure, component of the heterotrimeric velvet complex composed of LAE1, VE1 and VELB; VE1 acting as a bridging protein between LAE1 and VEL2. Interacts with VE1. Forms a heterodimeric complex with VOS1; the formation of the VELB-VOS1 complex is light-dependent.

The protein localises to the nucleus. It localises to the cytoplasm. Component of the velvet transcription factor complex that controls sexual/asexual developmental ratio in response to light, promoting sexual development in the darkness while stimulating asexual sporulation under illumination. The velvet complex acts as a global regulator for secondary metabolite gene expression. Component of the VELB-VOS1 heterodimeric complex that plays a dual role in activating genes associated with spore maturation and repressing certain development-associated genes. The VELB-VOS1 complex binds DNA through the DNA-binding domain of VOS1 that recognizes an 11-nucleotide consensus sequence 5'-CTGGCCGCGGC-3' consisting of two motifs in the promoters of key developmental regulatory genes. Controls the expression of the fumonisins gene cluster. Involved in cell wall integrity, cell surface hydrophobicity, hyphal polarity and conidiation pattern. Involved in oxidative stress resistance by positively regulating the transcription of the catalase-encoding gene CAT2. The sequence is that of Velvet complex subunit 2 from Gibberella moniliformis (strain M3125 / FGSC 7600) (Maize ear and stalk rot fungus).